Consider the following 208-residue polypeptide: Small ribosomal subunit protein uS4 (208 aa).

The 62-residue stretch at 97–158 (TRLDNVIYRM…RAQKYLCVQE (62 aa)) folds into the S4 RNA-binding domain.

The protein belongs to the universal ribosomal protein uS4 family. Part of the 30S ribosomal subunit. Contacts protein S5. The interaction surface between S4 and S5 is involved in control of translational fidelity.

One of the primary rRNA binding proteins, it binds directly to 16S rRNA where it nucleates assembly of the body of the 30S subunit. Its function is as follows. With S5 and S12 plays an important role in translational accuracy. The polypeptide is Small ribosomal subunit protein uS4 (Xylella fastidiosa (strain M12)).